Here is a 269-residue protein sequence, read N- to C-terminus: Energy-coupling factor transporter transmembrane protein EcfT (269 aa).

5 helical membrane-spanning segments follow: residues 28 to 48 (MIIYIIIIFWANNVVTNLLLL), 49 to 69 (AFTLLLIFLSQIKWSFFFNGV), 73 to 93 (IGIILFTTLFQVFFTQGGSVL), 109 to 129 (AILIFMRFVLIIFFSTLLTLT), and 246 to 266 (TLAIILVVILGIFLFCLKSPS).

Belongs to the energy-coupling factor EcfT family. In terms of assembly, forms a stable energy-coupling factor (ECF) transporter complex composed of 2 membrane-embedded substrate-binding proteins (S component), 2 ATP-binding proteins (A component) and 2 transmembrane proteins (T component). May be able to interact with more than 1 S component at a time.

Its subcellular location is the cell membrane. Transmembrane (T) component of an energy-coupling factor (ECF) ABC-transporter complex. Unlike classic ABC transporters this ECF transporter provides the energy necessary to transport a number of different substrates. This Streptococcus equi subsp. equi (strain 4047) protein is Energy-coupling factor transporter transmembrane protein EcfT.